The chain runs to 67 residues: uncharacterized protein (67 aa).

An N-terminal signal peptide occupies residues 1–28 (MSHVSVIAARLLVWVGILLCLGVPQLWA). An N-linked (GlcNAc...) asparagine; by host glycan is attached at asparagine 39.

This is an uncharacterized protein from Invertebrate iridescent virus 3 (IIV-3).